Here is a 268-residue protein sequence, read N- to C-terminus: Orotidine 5'-phosphate decarboxylase (268 aa).

Substrate-binding positions include Asp-39, 61 to 63 (KTH), 93 to 102 (DRKFADIGNT), Tyr-219, and Arg-237. Lys-95 serves as the catalytic Proton donor.

The protein belongs to the OMP decarboxylase family.

It carries out the reaction orotidine 5'-phosphate + H(+) = UMP + CO2. It participates in pyrimidine metabolism; UMP biosynthesis via de novo pathway; UMP from orotate: step 2/2. This chain is Orotidine 5'-phosphate decarboxylase (URA3), found in Pachysolen tannophilus (Yeast).